The sequence spans 99 residues: Large ribosomal subunit protein bL21 (99 aa).

This sequence belongs to the bacterial ribosomal protein bL21 family. As to quaternary structure, part of the 50S ribosomal subunit. Contacts protein L20.

Its function is as follows. This protein binds to 23S rRNA in the presence of protein L20. The chain is Large ribosomal subunit protein bL21 from Mesoplasma florum (strain ATCC 33453 / NBRC 100688 / NCTC 11704 / L1) (Acholeplasma florum).